A 131-amino-acid polypeptide reads, in one-letter code: Glycine cleavage system H protein (131 aa).

In terms of domain architecture, Lipoyl-binding spans 24 to 106 (RVTVGISDHA…YGEGWIFVVE (83 aa)). Lysine 65 is modified (N6-lipoyllysine).

The protein belongs to the GcvH family. The glycine cleavage system is composed of four proteins: P, T, L and H. It depends on (R)-lipoate as a cofactor.

In terms of biological role, the glycine cleavage system catalyzes the degradation of glycine. The H protein shuttles the methylamine group of glycine from the P protein to the T protein. This Xanthomonas axonopodis pv. citri (strain 306) protein is Glycine cleavage system H protein.